A 173-amino-acid chain; its full sequence is C-phycocyanin-3 beta subunit (173 aa).

Position 73 is an N4-methylasparagine (Asn-73). (2R,3E)-phycocyanobilin-binding residues include Cys-83 and Cys-154.

It belongs to the phycobiliprotein family. In terms of assembly, heterodimer of an alpha and a beta subunit, which further assembles into trimers and the trimers into hexamers. Contains two covalently linked bilin chromophores.

The protein resides in the cellular thylakoid membrane. Functionally, light-harvesting photosynthetic bile pigment-protein from the phycobiliprotein complex (phycobilisome, PBS). Phycocyanin is the major phycobiliprotein in the PBS rod. The polypeptide is C-phycocyanin-3 beta subunit (cpcB3) (Microchaete diplosiphon (Fremyella diplosiphon)).